We begin with the raw amino-acid sequence, 446 residues long: MNHEGSRSLYDRALSVLPGGVNSAVRAAPQPYPVFADHGDGGHVIDADGNRYIDWIQGLGPLLLGHDMPEQLQAAVQSRASEGPMYGMPSEIEVEHAEFVCRHVPSVEMIRFVNSGTEATVSACRLARAATGRNKIVVMQGGYHGAQESTLVEGDADDVAPSSAGIPQSFAEHTIPVPFNDPEAASEVFRAHGDDIAAVLVEPVQANMGIVYPEDGYHEALRSLCDDYGSLLIFDEVITGFRVGGLQCAQGKFDIDPDITTFGKIIGGGFPVGAIGGKTEYIEQFTPSGDVFQAGTFSGHPVTMAAGLETLKFCAEEDVYDHVNELGRQLREGLSDIVADQAPEYTVVGTDSLFKVVFTRGDGTPQGEACRNGCRQSSDCSRYGTCPTSATDVRDAETDRYARLFRPKMIEEGVLVSQNQFESNFVSYRHTAEDVEETLEAYKEAL.

K264 carries the post-translational modification N6-(pyridoxal phosphate)lysine.

The protein belongs to the class-III pyridoxal-phosphate-dependent aminotransferase family. HemL subfamily. The cofactor is pyridoxal 5'-phosphate.

The protein resides in the cytoplasm. The catalysed reaction is (S)-4-amino-5-oxopentanoate = 5-aminolevulinate. Its pathway is porphyrin-containing compound metabolism; protoporphyrin-IX biosynthesis; 5-aminolevulinate from L-glutamyl-tRNA(Glu): step 2/2. The sequence is that of Glutamate-1-semialdehyde 2,1-aminomutase from Natronomonas pharaonis (strain ATCC 35678 / DSM 2160 / CIP 103997 / JCM 8858 / NBRC 14720 / NCIMB 2260 / Gabara) (Halobacterium pharaonis).